We begin with the raw amino-acid sequence, 556 residues long: Sesquiterpene synthase 2 (556 aa).

Mg(2+) contacts are provided by Asp-309, Asp-313, Asp-453, and Glu-461. The short motif at 309-313 (DDIYD) is the DDXXD motif element.

The protein belongs to the terpene synthase family. Tpsa subfamily. Mg(2+) is required as a cofactor. Mn(2+) serves as cofactor. In terms of tissue distribution, mostly expressed in roots and mature leaflets and, to a lower extent, in rachis and developing leaflets.

It catalyses the reaction (2E,6E)-farnesyl diphosphate = alpha-humulene + diphosphate. The catalysed reaction is (2E,6E)-farnesyl diphosphate = alpha-selinene + diphosphate. It carries out the reaction (2E,6E)-farnesyl diphosphate = delta-cadinene + diphosphate. The enzyme catalyses (2E,6E)-farnesyl diphosphate = (1S,2S,4R)-beta-elemene + diphosphate. The protein operates within secondary metabolite biosynthesis; terpenoid biosynthesis. Functionally, sesquiterpene synthase involved in the biosynthesis of volatile compounds known for their medicinal efficacy for treating enteritis, dysentery, itch and some cancers. Mediates the conversion of (2E,6E)-farnesyl diphosphate (FPP) into beta-elemene, alpha-humulene, delta-cadinene and alpha-selinene. The protein is Sesquiterpene synthase 2 of Toona sinensis (Chinese mahogany).